The primary structure comprises 710 residues: Protein-glutamine gamma-glutamyltransferase Z (710 aa).

Residues C279, H338, and D361 contribute to the active site. N401, D403, E450, and E455 together coordinate Ca(2+).

Belongs to the transglutaminase superfamily. Transglutaminase family. It depends on Ca(2+) as a cofactor. In terms of tissue distribution, widely expressed.

The catalysed reaction is L-glutaminyl-[protein] + L-lysyl-[protein] = [protein]-L-lysyl-N(6)-5-L-glutamyl-[protein] + NH4(+). Functionally, catalyzes the cross-linking of proteins and the conjugation of polyamines to proteins. This chain is Protein-glutamine gamma-glutamyltransferase Z (TGM7), found in Homo sapiens (Human).